Consider the following 236-residue polypeptide: Small ribosomal subunit protein uS2c (236 aa).

It belongs to the universal ribosomal protein uS2 family.

It is found in the plastid. It localises to the chloroplast. This is Small ribosomal subunit protein uS2c (rps2) from Zea mays (Maize).